A 182-amino-acid chain; its full sequence is Constitutive photomorphogenesis protein 10 (182 aa).

The region spanning 36 to 182 (ASGKRIQREM…AKEWTLRFAK (147 aa)) is the UBC core domain.

This sequence belongs to the ubiquitin-conjugating enzyme family. In terms of assembly, component of the CDD complex, at least composed of COP10, DET1 and DDB1A. Interacts with E3 ubiquitin ligase COP1. Interacts with E2 ubiquitin conjugating UBC5. Interacts with CSN3, CSN4 and CSN8 subunits of the COP9 complex. Expressed in flower, leaf, stem and seedling. Expressed at lower level in root.

Its subcellular location is the nucleus. Functionally, component of light signal transduction machinery. Involved in repression of photomorphogenesis in darkness by participating in the CDD complex, a complex probably required to regulate the activity of ubiquitin conjugating enzymes (E2s). Repression of photomorphogenesis is probably mediated by ubiquitination and subsequent degradation of photomorphogenesis-promoting factors such as HY5, HYH and LAF1. Although strongly related to ubiquitin-conjugating enzyme, it has no catalytic activity by itself due to the absence of the conserved Cys active site at position 120. It can however enhance the activity of E2 conjugating enzymes. The protein is Constitutive photomorphogenesis protein 10 (COP10) of Arabidopsis thaliana (Mouse-ear cress).